A 500-amino-acid chain; its full sequence is Putative DNA recombinase (500 aa).

The region spanning 1–144 (MIAIYVRVST…SGRLQKMKKG (144 aa)) is the Resolvase/invertase-type recombinase catalytic domain. S9 (O-(5'-phospho-DNA)-serine intermediate) is an active-site residue. Positions 152–288 (LYGYKFVKEK…QELLGQSKRK (137 aa)) form a DNA-binding region, recombinase. The stretch at 372 to 448 (KEAEQSNHLS…IQSKMKVLDD (77 aa)) forms a coiled coil.

In the N-terminal section; belongs to the site-specific recombinase resolvase family.

Putative site-specific recombinase having a very important role in sporulation. It probably plays a role in the recombination of SpoIIIC and SpoIVCB to form sigma K factor. This Bacillus subtilis (strain 168) protein is Putative DNA recombinase (cisA).